We begin with the raw amino-acid sequence, 422 residues long: UDP-N-acetylglucosamine 1-carboxyvinyltransferase (422 aa).

22-23 contributes to the phosphoenolpyruvate binding site; sequence KN. R93 lines the UDP-N-acetyl-alpha-D-glucosamine pocket. C117 acts as the Proton donor in catalysis. C117 is subject to 2-(S-cysteinyl)pyruvic acid O-phosphothioketal. Residues 122 to 126, D305, and I327 contribute to the UDP-N-acetyl-alpha-D-glucosamine site; that span reads RPVDQ.

Belongs to the EPSP synthase family. MurA subfamily.

The protein localises to the cytoplasm. The enzyme catalyses phosphoenolpyruvate + UDP-N-acetyl-alpha-D-glucosamine = UDP-N-acetyl-3-O-(1-carboxyvinyl)-alpha-D-glucosamine + phosphate. The protein operates within cell wall biogenesis; peptidoglycan biosynthesis. Its function is as follows. Cell wall formation. Adds enolpyruvyl to UDP-N-acetylglucosamine. The sequence is that of UDP-N-acetylglucosamine 1-carboxyvinyltransferase from Bordetella bronchiseptica (strain ATCC BAA-588 / NCTC 13252 / RB50) (Alcaligenes bronchisepticus).